The following is an 84-amino-acid chain: Large ribosomal subunit protein bL31 (84 aa).

Disordered stretches follow at residues 1–41 and 63–84; these read MQHD…DSTN and RRYG…AADE. Over residues 21-30 the composition is skewed to polar residues; that stretch reads EITTRSTMET. Over residues 68-84 the composition is skewed to acidic residues; that stretch reads TDDDEGDDEETEDAADE.

This sequence belongs to the bacterial ribosomal protein bL31 family. Type A subfamily. As to quaternary structure, part of the 50S ribosomal subunit.

Functionally, binds the 23S rRNA. In Salinibacter ruber (strain DSM 13855 / M31), this protein is Large ribosomal subunit protein bL31.